The chain runs to 298 residues: uncharacterized protein (298 aa).

This is an uncharacterized protein from Methanocaldococcus jannaschii (strain ATCC 43067 / DSM 2661 / JAL-1 / JCM 10045 / NBRC 100440) (Methanococcus jannaschii).